The following is a 461-amino-acid chain: Eukaryotic translation initiation factor 3 subunit M (461 aa).

Positions Leu-42–Arg-61 are disordered. In terms of domain architecture, PCI spans Asp-205 to Tyr-376. Residues Ala-422–Glu-461 form a disordered region. Over residues Ser-431 to Gln-444 the composition is skewed to basic and acidic residues. Residues Pro-445–Glu-461 are compositionally biased toward low complexity.

The protein belongs to the eIF-3 subunit M family. As to quaternary structure, component of the eukaryotic translation initiation factor 3 (eIF-3) complex.

It localises to the cytoplasm. Component of the eukaryotic translation initiation factor 3 (eIF-3) complex, which is involved in protein synthesis of a specialized repertoire of mRNAs and, together with other initiation factors, stimulates binding of mRNA and methionyl-tRNAi to the 40S ribosome. The eIF-3 complex specifically targets and initiates translation of a subset of mRNAs involved in cell proliferation. In Aspergillus terreus (strain NIH 2624 / FGSC A1156), this protein is Eukaryotic translation initiation factor 3 subunit M.